We begin with the raw amino-acid sequence, 123 residues long: Large ribosomal subunit protein uL18 (123 aa).

This sequence belongs to the universal ribosomal protein uL18 family. As to quaternary structure, part of the 50S ribosomal subunit; part of the 5S rRNA/L5/L18/L25 subcomplex. Contacts the 5S and 23S rRNAs.

In terms of biological role, this is one of the proteins that bind and probably mediate the attachment of the 5S RNA into the large ribosomal subunit, where it forms part of the central protuberance. This Chlamydia felis (strain Fe/C-56) (Chlamydophila felis) protein is Large ribosomal subunit protein uL18.